We begin with the raw amino-acid sequence, 131 residues long: Large-conductance mechanosensitive channel (131 aa).

Transmembrane regions (helical) follow at residues 8 to 28 (FAIR…GAFG), 30 to 50 (IVSS…LGGI), and 67 to 87 (GAFI…FLFV).

This sequence belongs to the MscL family. As to quaternary structure, homopentamer.

The protein resides in the cell membrane. Channel that opens in response to stretch forces in the membrane lipid bilayer. May participate in the regulation of osmotic pressure changes within the cell. This chain is Large-conductance mechanosensitive channel, found in Geobacillus kaustophilus (strain HTA426).